The following is a 277-amino-acid chain: Caspase-3 (277 aa).

The residue at position 1 (M1) is an N-acetylmethionine. 2 consecutive propeptides follow at residues 1–9 and 10–28; these read MENNETSVD and SKSIKNFEVKTIHGSKSMD. K11 is subject to N6-acetyllysine. S26 carries the phosphoserine modification. Active-site residues include H121 and C163. C163 carries the S-nitrosocysteine; in inhibited form modification.

The protein belongs to the peptidase C14A family. Heterotetramer that consists of two anti-parallel arranged heterodimers, each one formed by a 17 kDa (p17) and a 12 kDa (p12) subunit. Interacts with BIRC6/bruce. Post-translationally, cleavage by granzyme B, caspase-6, caspase-8 and caspase-10 generates the two active subunits. Additional processing of the propeptides is likely due to the autocatalytic activity of the activated protease. Active heterodimers between the small subunit of caspase-7 protease and the large subunit of caspase-3 also occur and vice versa. S-nitrosylated on its catalytic site cysteine in unstimulated cell lines and denitrosylated upon activation of the Fas apoptotic pathway, associated with an increase in intracellular caspase activity. Fas therefore activates caspase-3 not only by inducing the cleavage of the caspase zymogen to its active subunits, but also by stimulating the denitrosylation of its active site thiol. In terms of processing, ubiquitinated by BIRC6; this activity is inhibited by DIABLO/SMAC.

The protein localises to the cytoplasm. It carries out the reaction Strict requirement for an Asp residue at positions P1 and P4. It has a preferred cleavage sequence of Asp-Xaa-Xaa-Asp-|- with a hydrophobic amino-acid residue at P2 and a hydrophilic amino-acid residue at P3, although Val or Ala are also accepted at this position.. Its activity is regulated as follows. Inhibited by BIRC6; following inhibition of BIRC6-caspase binding by DIABLO/SMAC, BIRC6 is subjected to caspase cleavage, leading to an increase in active caspases. Its function is as follows. Involved in the activation cascade of caspases responsible for apoptosis execution. At the onset of apoptosis, it proteolytically cleaves poly(ADP-ribose) polymerase PARP1 at a '216-Asp-|-Gly-217' bond. Cleaves and activates sterol regulatory element binding proteins (SREBPs) between the basic helix-loop-helix leucine zipper domain and the membrane attachment domain. Cleaves and activates caspase-6, -7 and -9 (CASP6, CASP7 and CASP9, respectively). Cleaves and inactivates interleukin-18 (IL18). Triggers cell adhesion in sympathetic neurons through RET cleavage. Cleaves IL-1 beta between an Asp and an Ala, releasing the mature cytokine which is involved in a variety of inflammatory processes. Cleaves and inhibits serine/threonine-protein kinase AKT1 in response to oxidative stress. Acts as an inhibitor of type I interferon production during virus-induced apoptosis by mediating cleavage of antiviral proteins CGAS, IRF3 and MAVS, thereby preventing cytokine overproduction. Also involved in pyroptosis by mediating cleavage and activation of gasdermin-E (GSDME). Cleaves XRCC4 and phospholipid scramblase proteins XKR4, XKR8 and XKR9, leading to promote phosphatidylserine exposure on apoptotic cell surface. Cleaves BIRC6 following inhibition of BIRC6-caspase binding by DIABLO/SMAC. This chain is Caspase-3 (CASP3), found in Mesocricetus auratus (Golden hamster).